A 145-amino-acid polypeptide reads, in one-letter code: Putative pre-16S rRNA nuclease (145 aa).

Belongs to the YqgF nuclease family.

The protein localises to the cytoplasm. In terms of biological role, could be a nuclease involved in processing of the 5'-end of pre-16S rRNA. This chain is Putative pre-16S rRNA nuclease, found in Tropheryma whipplei (strain Twist) (Whipple's bacillus).